A 176-amino-acid polypeptide reads, in one-letter code: Isopentenyl-diphosphate Delta-isomerase (176 aa).

Mn(2+)-binding residues include His-22 and His-28. One can recognise a Nudix hydrolase domain in the interval 26 to 160 (LRHKAISVFI…PETFTPWLHI (135 aa)). Cys-62 is a catalytic residue. His-64 is a Mn(2+) binding site. Position 82 (Glu-82) interacts with Mg(2+). Residues Glu-108 and Glu-110 each coordinate Mn(2+). Glu-110 is a catalytic residue.

This sequence belongs to the IPP isomerase type 1 family. It depends on Mg(2+) as a cofactor. Mn(2+) serves as cofactor.

It is found in the cytoplasm. The enzyme catalyses isopentenyl diphosphate = dimethylallyl diphosphate. It functions in the pathway isoprenoid biosynthesis; dimethylallyl diphosphate biosynthesis; dimethylallyl diphosphate from isopentenyl diphosphate: step 1/1. Its pathway is porphyrin-containing compound metabolism; chlorophyll biosynthesis. Catalyzes the 1,3-allylic rearrangement of the homoallylic substrate isopentenyl (IPP) to its highly electrophilic allylic isomer, dimethylallyl diphosphate (DMAPP). The protein is Isopentenyl-diphosphate Delta-isomerase of Jannaschia sp. (strain CCS1).